Consider the following 420-residue polypeptide: Methylaspartate ammonia-lyase 1 (420 aa).

(2S,3S)-3-methyl-L-aspartate is bound at residue glutamine 173. Aspartate 237, glutamate 272, and aspartate 306 together coordinate Mg(2+). Residue glutamine 328 participates in (2S,3S)-3-methyl-L-aspartate binding. Catalysis depends on lysine 330, which acts as the Proton acceptor. (2S,3S)-3-methyl-L-aspartate is bound at residue 359–360 (SC).

Homodimer. Requires Mg(2+) as cofactor.

It carries out the reaction (2S,3S)-3-methyl-L-aspartate = mesaconate + NH4(+). Its pathway is amino-acid degradation; L-glutamate degradation via mesaconate pathway; acetate and pyruvate from L-glutamate: step 2/4. Its function is as follows. Involved in the methylaspartate cycle. Catalyzes the formation of the alpha,beta-unsaturated bond by the reversible anti elimination of ammonia from L-threo-beta-methylaspartate (L-threo-(2S,3S)-3-methylaspartate) to give mesaconate. It can also catalyze the amination of fumarate and ethylfumarate, and the deamination of hydroxylamine, hydrazine, methylamine and ethylamine. The polypeptide is Methylaspartate ammonia-lyase 1 (Carboxydothermus hydrogenoformans (strain ATCC BAA-161 / DSM 6008 / Z-2901)).